The sequence spans 95 residues: UPF0235 protein Adeh_1087 (95 aa).

The protein belongs to the UPF0235 family.

This chain is UPF0235 protein Adeh_1087, found in Anaeromyxobacter dehalogenans (strain 2CP-C).